The following is a 299-amino-acid chain: 33 kDa chaperonin (299 aa).

2 disulfides stabilise this stretch: Cys-240–Cys-242 and Cys-273–Cys-276.

The protein belongs to the HSP33 family. In terms of processing, under oxidizing conditions two disulfide bonds are formed involving the reactive cysteines. Under reducing conditions zinc is bound to the reactive cysteines and the protein is inactive.

The protein localises to the cytoplasm. Its function is as follows. Redox regulated molecular chaperone. Protects both thermally unfolding and oxidatively damaged proteins from irreversible aggregation. Plays an important role in the bacterial defense system toward oxidative stress. The chain is 33 kDa chaperonin from Gloeothece citriformis (strain PCC 7424) (Cyanothece sp. (strain PCC 7424)).